The primary structure comprises 201 residues: Small ribosomal subunit protein uS4c (201 aa).

Residues 89–149 (MRLDNILFRL…DKPKSGALIK (61 aa)) enclose the S4 RNA-binding domain.

Belongs to the universal ribosomal protein uS4 family. In terms of assembly, part of the 30S ribosomal subunit. Contacts protein S5. The interaction surface between S4 and S5 is involved in control of translational fidelity.

The protein resides in the plastid. In terms of biological role, one of the primary rRNA binding proteins, it binds directly to 16S rRNA where it nucleates assembly of the body of the 30S subunit. Functionally, with S5 and S12 plays an important role in translational accuracy. The chain is Small ribosomal subunit protein uS4c (rps4) from Cuscuta reflexa (Southern Asian dodder).